A 180-amino-acid polypeptide reads, in one-letter code: Cytokinin-beta-glucosidase 3 (180 aa).

Its function is as follows. Hydrolyzes cytokinin glucosides thus liberating free cytokinins. This is Cytokinin-beta-glucosidase 3 (ROLC3) from Panax ginseng (Korean ginseng).